The following is a 1429-amino-acid chain: Autophagy-related protein 11 (1429 aa).

A disordered region spans residues 71–99; sequence TQRSQPGASSPPLSELPLPRYNAHTPPNS. The span at 80 to 89 shows a compositional bias: low complexity; it reads SPPLSELPLP. 4 coiled-coil regions span residues 143 to 173, 553 to 590, 632 to 815, and 851 to 989; these read VMLR…KEWS, DDLL…QTQA, LETL…LEDI, and EGDM…RLES. The tract at residues 1024–1061 is disordered; sequence DGTMHIQRTPRSERSLATTANPNDSDPSSSLRRSSTLN. Low complexity predominate over residues 1042–1061; the sequence is TANPNDSDPSSSLRRSSTLN. Residues 1105-1143 are a coiled coil; that stretch reads ADAVYRRVKDVEHMARKLQREARAYREKAHSFQKEAHDK. Residues 1209-1229 are compositionally biased toward basic and acidic residues; that stretch reads SKSLQHDQAGETRKDGARGET. 2 disordered regions span residues 1209–1241 and 1336–1429; these read SKSL…DNPF and SSRG…LIGP. A compositionally biased stretch (acidic residues) spans 1230–1239; it reads ESLDDDENDN. Composition is skewed to polar residues over residues 1345 to 1372 and 1383 to 1393; these read ASET…QHMS and QETPQQTNSIS.

This sequence belongs to the ATG11 family. As to quaternary structure, homodimer.

Its subcellular location is the preautophagosomal structure membrane. It localises to the vacuole membrane. In terms of biological role, involved in cytoplasm to vacuole transport (Cvt), pexophagy, mitophagy and nucleophagy. Recruits mitochondria for their selective degradation via autophagy (mitophagy) during starvation. Works as scaffold proteins that recruit ATG proteins to the pre-autophagosome (PAS), the site of vesicle/autophagosome formation. Required for the Cvt vesicles completion. This Neurospora crassa (strain ATCC 24698 / 74-OR23-1A / CBS 708.71 / DSM 1257 / FGSC 987) protein is Autophagy-related protein 11 (apg-8).